A 410-amino-acid chain; its full sequence is Pectate lyase PEL9 (410 aa).

The first 18 residues, 1–18 (MMGKSVWVFAALFPAVLA), serve as a signal peptide directing secretion. Positions 191, 215, 216, and 219 each coordinate Ca(2+). Asn-234 carries an N-linked (GlcNAc...) asparagine glycan. Lys-271 (proton acceptor) is an active-site residue. Residues 342 to 351 (GEAPTSLSDE) show a composition bias toward polar residues. Disordered stretches follow at residues 342–361 (GEAP…SWDG) and 381–410 (ERNA…DWSA).

Belongs to the polysaccharide lyase 9 family. The cofactor is Ca(2+).

The protein resides in the secreted. It carries out the reaction Eliminative cleavage of (1-&gt;4)-alpha-D-galacturonan to give oligosaccharides with 4-deoxy-alpha-D-galact-4-enuronosyl groups at their non-reducing ends.. Inhibited by iron ions. Activated in presence of the surfactant polysorbate 20, while inhibited in the presence of Triton X-100 and sodium dodecyl sulfate. Inhibited in presence of the organic solvents methanol, ethanol, propan-2-ol and acetone. Its function is as follows. Presents an endo-cleaving activity on the homogalacturonan (HG) region in pectin. Active on homogalacturonan with a degree of polymerization above 4, and does not appear to be affected by the degree of methylation of the substrate. Does not degrade linear rhamnogalacturonan. This is Pectate lyase PEL9 from Emericella nidulans (strain FGSC A4 / ATCC 38163 / CBS 112.46 / NRRL 194 / M139) (Aspergillus nidulans).